A 365-amino-acid chain; its full sequence is tRNA (guanine(6)-N2)-methyltransferase (365 aa).

Residues 69-182 (NENSRLLHRV…KDVFFLGIDT (114 aa)) enclose the THUMP domain. S-adenosyl-L-methionine is bound by residues 198–202 (HPAHL), 228–230 (SGT), E248, 276–277 (DA), and N293.

It belongs to the methyltransferase superfamily. In terms of assembly, monomer in solution.

Its subcellular location is the cytoplasm. It catalyses the reaction guanosine(6) in tRNA + S-adenosyl-L-methionine = N(2)-methylguanosine(6) in tRNA + S-adenosyl-L-homocysteine + H(+). Its function is as follows. S-adenosyl-L-methionine-dependent methyltransferase that catalyzes the methylation of the guanosine nucleotide at position 6 (m2G6) in tRNA(Phe). The chain is tRNA (guanine(6)-N2)-methyltransferase from Pyrococcus furiosus (strain ATCC 43587 / DSM 3638 / JCM 8422 / Vc1).